Here is a 446-residue protein sequence, read N- to C-terminus: Histidine--tRNA ligase (446 aa).

It belongs to the class-II aminoacyl-tRNA synthetase family. As to quaternary structure, homodimer.

It is found in the cytoplasm. The catalysed reaction is tRNA(His) + L-histidine + ATP = L-histidyl-tRNA(His) + AMP + diphosphate + H(+). This chain is Histidine--tRNA ligase, found in Paraburkholderia xenovorans (strain LB400).